We begin with the raw amino-acid sequence, 498 residues long: MRINPTTSDPAVSIREKNNLGRIAQIIGPVLDVAFPPGKMPNIYNALVVKGRDTLGQEINVTCEVQQLLGNNRVRAVAMSATEGLKRGMDVVDMGNPLSVPVGGATLGRIFNVLGEPVNNLGPVDTLTTSPIHKSAPAFIDLDTTLSIFETGIKVVDLLAPYRRGGKIGLFGGAGVGKTVLIMELINNIAKAHGGVSVFGGVGERTREGNDLYMEMKESGVINELNLADSKVALVYGQMNEPPGARMRVGLTALTMAEYFRDVNEQDVLLFIDNIFRFVQAGSEVSALLGRMPSAVGYQPTLSAEMGSLQERITSTKKGSITSIQAVYVPADDLTDPAPATTFAHLDATTVLSRGLAAKGIYPAVDPLDSTSTMLQPRIVGEEHYETAQQVKQTLQRYKELQDIIAILGLDELSEEDRLTVARARKIERFLSQPFFVAEVFTGSPGKYVGLAETIRGFNLILSGEFDSLPEQAFYLVGNIDEATAKATNLEMESKLKK.

Thr6 carries the phosphothreonine modification. Ser13 carries the phosphoserine modification. 172–179 serves as a coordination point for ATP; it reads GGAGVGKT.

This sequence belongs to the ATPase alpha/beta chains family. F-type ATPases have 2 components, CF(1) - the catalytic core - and CF(0) - the membrane proton channel. CF(1) has five subunits: alpha(3), beta(3), gamma(1), delta(1), epsilon(1). CF(0) has four main subunits: a(1), b(1), b'(1) and c(9-12).

It is found in the plastid. It localises to the chloroplast thylakoid membrane. It catalyses the reaction ATP + H2O + 4 H(+)(in) = ADP + phosphate + 5 H(+)(out). In terms of biological role, produces ATP from ADP in the presence of a proton gradient across the membrane. The catalytic sites are hosted primarily by the beta subunits. This is ATP synthase subunit beta, chloroplastic from Brassica napus (Rape).